A 156-amino-acid polypeptide reads, in one-letter code: uncharacterized protein (156 aa).

This is an uncharacterized protein from Methanocaldococcus jannaschii (strain ATCC 43067 / DSM 2661 / JAL-1 / JCM 10045 / NBRC 100440) (Methanococcus jannaschii).